Here is a 126-residue protein sequence, read N- to C-terminus: Histone H2B type 1-M (126 aa).

The interval 1–36 is disordered; the sequence is MPEPVKSAPVPKKGSKKAINKAQKKDGKKRKRSRKE. Residue proline 2 is modified to N-acetylproline. Glutamate 3 carries the post-translational modification ADP-ribosyl glutamic acid. Position 6 is an N6-(2-hydroxyisobutyryl)lysine; alternate (lysine 6). Lysine 6 bears the N6-(beta-hydroxybutyryl)lysine; alternate mark. An N6-acetyllysine; alternate modification is found at lysine 6. Lysine 6 is modified (N6-butyryllysine; alternate). Lysine 6 is modified (N6-crotonyllysine; alternate). At lysine 6 the chain carries N6-lactoyllysine; alternate. Lysine 6 is covalently cross-linked (Glycyl lysine isopeptide (Lys-Gly) (interchain with G-Cter in SUMO2); alternate). An ADP-ribosylserine modification is found at serine 7. Lysine 12 is modified (N6-(beta-hydroxybutyryl)lysine; alternate). Lysine 12 and lysine 13 each carry N6-acetyllysine; alternate. An N6-crotonyllysine; alternate mark is found at lysine 12 and lysine 13. Lysine 12 carries the N6-lactoyllysine; alternate modification. Lysine 13 bears the N6-(2-hydroxyisobutyryl)lysine; alternate mark. Serine 15 carries the phosphoserine; by STK4/MST1 modification. Residues lysine 16, lysine 17, lysine 21, and lysine 24 each carry the N6-acetyllysine; alternate modification. N6-crotonyllysine; alternate is present on residues lysine 16, lysine 17, lysine 21, and lysine 24. 4 positions are modified to N6-lactoyllysine; alternate: lysine 16, lysine 17, lysine 21, and lysine 24. 2 positions are modified to N6-(beta-hydroxybutyryl)lysine; alternate: lysine 17 and lysine 21. Lysine 17 bears the N6-glutaryllysine; alternate mark. An N6-(2-hydroxyisobutyryl)lysine; alternate mark is found at lysine 21 and lysine 24. Residue lysine 21 is modified to N6-butyryllysine; alternate. Lysine 21 is covalently cross-linked (Glycyl lysine isopeptide (Lys-Gly) (interchain with G-Cter in SUMO2); alternate). Residue lysine 25 is modified to N6-(2-hydroxyisobutyryl)lysine. Lysine 35 carries the post-translational modification N6-(2-hydroxyisobutyryl)lysine; alternate. Lysine 35 carries the N6-(beta-hydroxybutyryl)lysine; alternate modification. At lysine 35 the chain carries N6-crotonyllysine; alternate. Lysine 35 bears the N6-glutaryllysine; alternate mark. Lysine 35 is subject to N6-succinyllysine; alternate. A Glycyl lysine isopeptide (Lys-Gly) (interchain with G-Cter in ubiquitin); alternate cross-link involves residue lysine 35. Residue glutamate 36 is modified to PolyADP-ribosyl glutamic acid. Serine 37 bears the Phosphoserine; by AMPK mark. Residues lysine 44, lysine 47, and lysine 58 each carry the N6-(2-hydroxyisobutyryl)lysine; alternate modification. Residue lysine 44 is modified to N6-lactoyllysine; alternate. Lysine 44 and lysine 47 each carry N6-glutaryllysine; alternate. Lysine 47 is subject to N6-methyllysine; alternate. N6,N6-dimethyllysine; alternate is present on lysine 58. Arginine 80 is subject to Dimethylated arginine. At lysine 86 the chain carries N6-(2-hydroxyisobutyryl)lysine; alternate. Residue lysine 86 is modified to N6-(beta-hydroxybutyryl)lysine; alternate. N6-acetyllysine; alternate is present on lysine 86. Lysine 86 is subject to N6-lactoyllysine; alternate. At lysine 86 the chain carries N6,N6,N6-trimethyllysine; alternate. Omega-N-methylarginine is present on residues arginine 87 and arginine 93. At lysine 109 the chain carries N6-(2-hydroxyisobutyryl)lysine; alternate. N6-lactoyllysine; alternate is present on lysine 109. The residue at position 109 (lysine 109) is an N6-glutaryllysine; alternate. Lysine 109 carries the post-translational modification N6-methyllysine; alternate. Serine 113 is a glycosylation site (O-linked (GlcNAc) serine). Threonine 116 bears the Phosphothreonine mark. Residues lysine 117 and lysine 121 each carry the N6-(2-hydroxyisobutyryl)lysine; alternate modification. N6-(beta-hydroxybutyryl)lysine; alternate is present on residues lysine 117 and lysine 121. N6-lactoyllysine; alternate is present on residues lysine 117 and lysine 121. Residues lysine 117 and lysine 121 each carry the N6-glutaryllysine; alternate modification. 2 positions are modified to N6-succinyllysine; alternate: lysine 117 and lysine 121. Residue lysine 117 is modified to N6-malonyllysine; alternate. Residue lysine 117 is modified to N6-methylated lysine; alternate. Lysine 121 is covalently cross-linked (Glycyl lysine isopeptide (Lys-Gly) (interchain with G-Cter in ubiquitin); alternate).

This sequence belongs to the histone H2B family. The nucleosome is a histone octamer containing two molecules each of H2A, H2B, H3 and H4 assembled in one H3-H4 heterotetramer and two H2A-H2B heterodimers. The octamer wraps approximately 147 bp of DNA. Monoubiquitination at Lys-35 (H2BK34Ub) by the MSL1/MSL2 dimer is required for histone H3 'Lys-4' (H3K4me) and 'Lys-79' (H3K79me) methylation and transcription activation at specific gene loci, such as HOXA9 and MEIS1 loci. Similarly, monoubiquitination at Lys-121 (H2BK120Ub) by the RNF20/40 complex gives a specific tag for epigenetic transcriptional activation and is also prerequisite for histone H3 'Lys-4' and 'Lys-79' methylation. It also functions cooperatively with the FACT dimer to stimulate elongation by RNA polymerase II. H2BK120Ub also acts as a regulator of mRNA splicing: deubiquitination by USP49 is required for efficient cotranscriptional splicing of a large set of exons. In terms of processing, phosphorylation at Ser-37 (H2BS36ph) by AMPK in response to stress promotes transcription. Phosphorylated on Ser-15 (H2BS14ph) by STK4/MST1 during apoptosis; which facilitates apoptotic chromatin condensation. Also phosphorylated on Ser-15 in response to DNA double strand breaks (DSBs), and in correlation with somatic hypermutation and immunoglobulin class-switch recombination. Post-translationally, glcNAcylation at Ser-113 promotes monoubiquitination of Lys-121. It fluctuates in response to extracellular glucose, and associates with transcribed genes. ADP-ribosylated by PARP1 or PARP2 on Ser-7 (H2BS6ADPr) in response to DNA damage. H2BS6ADPr promotes recruitment of CHD1L. Mono-ADP-ribosylated on Glu-3 (H2BE2ADPr) by PARP3 in response to single-strand breaks. Poly ADP-ribosylation on Glu-36 (H2BE35ADPr) by PARP1 regulates adipogenesis: it inhibits phosphorylation at Ser-37 (H2BS36ph), thereby blocking expression of pro-adipogenetic genes. In terms of processing, crotonylation (Kcr) is specifically present in male germ cells and marks testis-specific genes in post-meiotic cells, including X-linked genes that escape sex chromosome inactivation in haploid cells. Crotonylation marks active promoters and enhancers and confers resistance to transcriptional repressors. It is also associated with post-meiotically activated genes on autosomes. Post-translationally, lactylated in macrophages by EP300/P300 by using lactoyl-CoA directly derived from endogenous or exogenous lactate, leading to stimulates gene transcription.

The protein resides in the nucleus. The protein localises to the chromosome. Functionally, core component of nucleosome. Nucleosomes wrap and compact DNA into chromatin, limiting DNA accessibility to the cellular machineries which require DNA as a template. Histones thereby play a central role in transcription regulation, DNA repair, DNA replication and chromosomal stability. DNA accessibility is regulated via a complex set of post-translational modifications of histones, also called histone code, and nucleosome remodeling. This chain is Histone H2B type 1-M, found in Homo sapiens (Human).